Here is a 224-residue protein sequence, read N- to C-terminus: Flagellar L-ring protein (224 aa).

The N-terminal stretch at 1 to 15 is a signal peptide; sequence MARYLLLASTLLLAA. A lipid anchor (N-palmitoyl cysteine) is attached at Cys-16. Residue Cys-16 is the site of S-diacylglycerol cysteine attachment.

This sequence belongs to the FlgH family. The basal body constitutes a major portion of the flagellar organelle and consists of four rings (L,P,S, and M) mounted on a central rod.

The protein localises to the cell outer membrane. It localises to the bacterial flagellum basal body. In terms of biological role, assembles around the rod to form the L-ring and probably protects the motor/basal body from shearing forces during rotation. The polypeptide is Flagellar L-ring protein (Shewanella sp. (strain ANA-3)).